Here is a 427-residue protein sequence, read N- to C-terminus: Glutamate-1-semialdehyde 2,1-aminomutase (427 aa).

Lysine 265 carries the post-translational modification N6-(pyridoxal phosphate)lysine.

Belongs to the class-III pyridoxal-phosphate-dependent aminotransferase family. HemL subfamily. As to quaternary structure, homodimer. Requires pyridoxal 5'-phosphate as cofactor.

It is found in the cytoplasm. It catalyses the reaction (S)-4-amino-5-oxopentanoate = 5-aminolevulinate. The protein operates within porphyrin-containing compound metabolism; protoporphyrin-IX biosynthesis; 5-aminolevulinate from L-glutamyl-tRNA(Glu): step 2/2. The sequence is that of Glutamate-1-semialdehyde 2,1-aminomutase from Marinomonas sp. (strain MWYL1).